A 261-amino-acid chain; its full sequence is MADDGPIIEEIAEKNGRVARIMQRLQHDTQRVTSVPGFNTSATGYADLIALLDQYKNDLEAVGFNDLEQARRRAPSVDITVGSNSTNLVDYSHGRHDMPSHRRHDSSDEEITAANSHHQSPINVGNRNDTDGTNGRNGSRAGSSSSDRVRMIAGRNRISKTRRYRPGQKALEEIRKYQESEDLLIPKAPFARLVREIMQTSTPFSSDLRIRSDAINALQEASEALLVQMFDGSSLISAHSKRATLTTTDVQLYRRLCLPNL.

The disordered stretch occupies residues 80-150 (TVGSNSTNLV…AGSSSSDRVR (71 aa)). Residues 113 to 127 (AANSHHQSPINVGNR) are compositionally biased toward polar residues. Over residues 132–146 (GTNGRNGSRAGSSSS) the composition is skewed to low complexity. The segment at 164 to 261 (YRPGQKALEE…LYRRLCLPNL (98 aa)) is H3-like.

This sequence belongs to the histone H3 family. As to quaternary structure, forms a nucleosome-like histone octamer containing two molecules each of H2A, H2B, cpar-1 and H4 assembled in one cpar-1-H4 heterotetramer and two H2A-H2B heterodimers. Post-translationally, cleaved at the onset of meiotic anaphase I, likely by separase sep-1.

Its subcellular location is the nucleus. The protein resides in the chromosome. Histone H3-like variant which exclusively replaces conventional H3 in the nucleosome core of centromeric chromatin at the inner plate of the kinetochore. Required for recruitment and assembly of kinetochore proteins, mitotic progression and chromosome segregation. May serve as an epigenetic mark that propagates centromere identity through replication and cell division. Not required for chromosome segregation during meiosis. The polypeptide is Histone H3-like centromeric protein cpar-1 (Caenorhabditis elegans).